Here is a 91-residue protein sequence, read N- to C-terminus: Small ribosomal subunit protein uS19 (91 aa).

The protein belongs to the universal ribosomal protein uS19 family.

Its function is as follows. Protein S19 forms a complex with S13 that binds strongly to the 16S ribosomal RNA. The sequence is that of Small ribosomal subunit protein uS19 from Bordetella bronchiseptica (strain ATCC BAA-588 / NCTC 13252 / RB50) (Alcaligenes bronchisepticus).